Consider the following 138-residue polypeptide: Large ribosomal subunit protein uL16 (138 aa).

The segment covering 1–19 (MLIPRKVKHRKQHHPKKKG) has biased composition (basic residues). The disordered stretch occupies residues 1 to 24 (MLIPRKVKHRKQHHPKKKGTASGG).

This sequence belongs to the universal ribosomal protein uL16 family. Part of the 50S ribosomal subunit.

Its function is as follows. Binds 23S rRNA and is also seen to make contacts with the A and possibly P site tRNAs. In Mycobacteroides abscessus (strain ATCC 19977 / DSM 44196 / CCUG 20993 / CIP 104536 / JCM 13569 / NCTC 13031 / TMC 1543 / L948) (Mycobacterium abscessus), this protein is Large ribosomal subunit protein uL16.